Consider the following 708-residue polypeptide: Otogelin-like protein (708 aa).

A VWFD domain is found at 1–113; sequence KIIVNRLARK…SWEIEKSFEV (113 aa). N-linked (GlcNAc...) asparagine glycosylation occurs at Asn-553. 4 disulfide bridges follow: Cys-616–Cys-672, Cys-637–Cys-686, Cys-648–Cys-703, and Cys-652–Cys-705. The CTCK domain occupies 616–708; that stretch reads CKREERICQK…EPIDCTCQWN (93 aa).

The protein belongs to the otogelin family.

The protein resides in the secreted. This is Otogelin-like protein (OTOGL) from Pongo abelii (Sumatran orangutan).